The primary structure comprises 1561 residues: Synemin (1561 aa).

Residues 1-10 (MLSWRLQTGS) are head. Residues 11–49 (EKAELQELNARLYDYVCRVRELERENLLLEEELRSRLSR) are coil 1A. The interval 11-320 (EKAELQELNA…YRALLEGESN (310 aa)) is interaction with DMD and UTRN. Positions 11-322 (EKAELQELNA…ALLEGESNPE (312 aa)) constitute an IF rod domain. Positions 50-58 (EDRWAEDQA) are linker 1. The segment at 59–163 (LYAEEARSLR…DLRARAASLT (105 aa)) is coil 1B. The segment at 164 to 186 (MHFRARATSPAAPPPRLRDVHDS) is linker 12. The tract at residues 187–300 (YALLVAESWR…LRDYQELLQV (114 aa)) is coil 2. The tail stretch occupies residues 301-1561 (KTGLSLEVAT…EEEEEGEGWF (1261 aa)). Polar residues-rich tracts occupy residues 371–390 (SSAS…TTAV) and 401–421 (SRHS…KTIS). Disordered stretches follow at residues 371–421 (SSAS…KTIS), 549–574 (DARK…RSVK), and 591–637 (EVST…DSTT). A compositionally biased stretch (basic and acidic residues) spans 601 to 624 (GRKDVSHSGGREAETKETRFRLDT). Residues 625-637 (QDTASSLQSDSTT) are compositionally biased toward polar residues. T653 carries the post-translational modification Phosphothreonine. Residues S655, S778, S780, S1044, S1049, S1077, S1087, S1179, and S1182 each carry the phosphoserine modification. Disordered regions lie at residues 1033 to 1061 (SVVR…VPAG) and 1075 to 1099 (SPSG…QGPV). Positions 1086–1099 (VSPSSDQRVTQGPV) are enriched in polar residues. The tract at residues 1152–1453 (VSGDFSEAVS…GPKETSFTFQ (302 aa)) is interaction with TLN1 and VCL. The segment at 1212–1231 (ADISGSGRMPGSERSHTEKE) is disordered. A compositionally biased stretch (basic and acidic residues) spans 1222–1231 (GSERSHTEKE). The interaction with DMD and UTRN stretch occupies residues 1242-1557 (AQVGGNFATE…DNEEEEEEEG (316 aa)). S1425 is modified (phosphoserine). R1481 is modified (omega-N-methylarginine). The disordered stretch occupies residues 1491 to 1519 (DERVASTGSGASPGDAHQAPGEKGTEQAG).

Belongs to the intermediate filament family. As to quaternary structure, interacts with DES, DMD, DTNA, TLN1, UTRN and VCL. Isoform 1 and isoform 2 interact with GFAP and VIM. As to expression, isoform 2 and isoform 3 are detected in adult skeletal muscle, heart and bladder, whereas isoform 1 is only detected in adult bladder (at protein level).

The protein resides in the cytoplasm. It localises to the cytoskeleton. It is found in the cell junction. The protein localises to the adherens junction. Its function is as follows. Type-VI intermediate filament (IF) which plays an important cytoskeletal role within the muscle cell cytoskeleton. It forms heteromeric IFs with desmin and/or vimentin, and via its interaction with cytoskeletal proteins alpha-dystrobrevin, dystrophin, talin-1, utrophin and vinculin, is able to link these heteromeric IFs to adherens-type junctions, such as to the costameres, neuromuscular junctions, and myotendinous junctions within striated muscle cells. This Mus musculus (Mouse) protein is Synemin.